The sequence spans 114 residues: MGTRLFFYVALCLLWTGHMDAGITQSPRHKVTETGTPVTLRCHQTENHRYMYWYRQDPGHGLRLIHYSYGVKDTDKGEVSDGYSVSRSKTEDFLLTLESATSSQTSVYFCAISE.

An N-terminal signal peptide occupies residues 1-21; sequence MGTRLFFYVALCLLWTGHMDA. The Ig-like domain occupies 22–114; it reads GITQSPRHKV…TSVYFCAISE (93 aa). An intrachain disulfide couples C42 to C110.

In terms of assembly, alpha-beta TR is a heterodimer composed of an alpha and beta chain; disulfide-linked. The alpha-beta TR is associated with the transmembrane signaling CD3 coreceptor proteins to form the TR-CD3 (TcR or TCR). The assembly of alpha-beta TR heterodimers with CD3 occurs in the endoplasmic reticulum where a single alpha-beta TR heterodimer associates with one CD3D-CD3E heterodimer, one CD3G-CD3E heterodimer and one CD247 homodimer forming a stable octameric structure. CD3D-CD3E and CD3G-CD3E heterodimers preferentially associate with TR alpha and TR beta chains, respectively. The association of the CD247 homodimer is the last step of TcR assembly in the endoplasmic reticulum and is required for transport to the cell surface.

The protein localises to the cell membrane. V region of the variable domain of T cell receptor (TR) beta chain that participates in the antigen recognition. Alpha-beta T cell receptors are antigen specific receptors which are essential to the immune response and are present on the cell surface of T lymphocytes. Recognize peptide-major histocompatibility (MH) (pMH) complexes that are displayed by antigen presenting cells (APC), a prerequisite for efficient T cell adaptive immunity against pathogens. Binding of alpha-beta TR to pMH complex initiates TR-CD3 clustering on the cell surface and intracellular activation of LCK that phosphorylates the ITAM motifs of CD3G, CD3D, CD3E and CD247 enabling the recruitment of ZAP70. In turn ZAP70 phosphorylates LAT, which recruits numerous signaling molecules to form the LAT signalosome. The LAT signalosome propagates signal branching to three major signaling pathways, the calcium, the mitogen-activated protein kinase (MAPK) kinase and the nuclear factor NF-kappa-B (NF-kB) pathways, leading to the mobilization of transcription factors that are critical for gene expression and essential for T cell growth and differentiation. The T cell repertoire is generated in the thymus, by V-(D)-J rearrangement. This repertoire is then shaped by intrathymic selection events to generate a peripheral T cell pool of self-MH restricted, non-autoaggressive T cells. Post-thymic interaction of alpha-beta TR with the pMH complexes shapes TR structural and functional avidity. This chain is T cell receptor beta variable 10-3, found in Homo sapiens (Human).